Reading from the N-terminus, the 365-residue chain is Phospho-N-acetylmuramoyl-pentapeptide-transferase (365 aa).

The next 10 helical transmembrane spans lie at 22–42, 74–94, 95–115, 134–154, 168–188, 201–221, 240–260, 267–287, 292–312, and 342–362; these read YISV…LALG, TMGG…WGNL, TSIY…IGFF, KFAL…YLLS, SLYI…IING, GLAI…AYIE, LAEV…FLWF, VFMG…IAVM, LIFF…MLQV, and KVVI…FAAI.

Belongs to the glycosyltransferase 4 family. MraY subfamily. The cofactor is Mg(2+).

Its subcellular location is the cell inner membrane. It carries out the reaction UDP-N-acetyl-alpha-D-muramoyl-L-alanyl-gamma-D-glutamyl-meso-2,6-diaminopimeloyl-D-alanyl-D-alanine + di-trans,octa-cis-undecaprenyl phosphate = di-trans,octa-cis-undecaprenyl diphospho-N-acetyl-alpha-D-muramoyl-L-alanyl-D-glutamyl-meso-2,6-diaminopimeloyl-D-alanyl-D-alanine + UMP. It functions in the pathway cell wall biogenesis; peptidoglycan biosynthesis. Its function is as follows. Catalyzes the initial step of the lipid cycle reactions in the biosynthesis of the cell wall peptidoglycan: transfers peptidoglycan precursor phospho-MurNAc-pentapeptide from UDP-MurNAc-pentapeptide onto the lipid carrier undecaprenyl phosphate, yielding undecaprenyl-pyrophosphoryl-MurNAc-pentapeptide, known as lipid I. The chain is Phospho-N-acetylmuramoyl-pentapeptide-transferase from Francisella tularensis subsp. holarctica (strain OSU18).